A 474-amino-acid polypeptide reads, in one-letter code: Ribosomal RNA small subunit methyltransferase F (474 aa).

S-adenosyl-L-methionine-binding positions include 119-125 (AAAPGSK), E143, D170, and D188. The active-site Nucleophile is C241.

The protein belongs to the class I-like SAM-binding methyltransferase superfamily. RsmB/NOP family.

The protein localises to the cytoplasm. It carries out the reaction cytidine(1407) in 16S rRNA + S-adenosyl-L-methionine = 5-methylcytidine(1407) in 16S rRNA + S-adenosyl-L-homocysteine + H(+). Specifically methylates the cytosine at position 1407 (m5C1407) of 16S rRNA. The sequence is that of Ribosomal RNA small subunit methyltransferase F from Shewanella oneidensis (strain ATCC 700550 / JCM 31522 / CIP 106686 / LMG 19005 / NCIMB 14063 / MR-1).